The primary structure comprises 294 residues: MMPIKTFVSERRAANLLAQIRWRNGVYCPSCRAESVIRYGSYRVFQRYLCKDCDRTFNDQTGTVFEHSAVALRKWFLAVYTYIRLNTSIRQLDAEIDVSYKTVYRRVQRFLRALDAPRPHLEGPVEIDEFYVKAGLKGRERDQPSRSRGLSTRGRGTYAEDKLPVFVLADRGTGERHVIPAKAATESRIRLLLADRQQESLTVYTDGFRAYDPLDEDDAFTREYVVHGDGEYVNGDVHVNTCESHASLARRWLSPHRGVSKDRLTPYLRAFQLRREVFRKPGKEALKTILETAL.

This is an uncharacterized protein from Halobacterium salinarum (strain ATCC 700922 / JCM 11081 / NRC-1) (Halobacterium halobium).